A 164-amino-acid polypeptide reads, in one-letter code: Phosphopantetheine adenylyltransferase (164 aa).

Threonine 9 is a binding site for substrate. ATP contacts are provided by residues 9-10 (TF) and histidine 17. The substrate site is built by lysine 41, leucine 73, and arginine 87. Residues 88–90 (GLR), glutamate 98, and 123–129 (YMFISAT) contribute to the ATP site.

The protein belongs to the bacterial CoaD family. As to quaternary structure, homohexamer. Mg(2+) serves as cofactor.

The protein localises to the cytoplasm. The enzyme catalyses (R)-4'-phosphopantetheine + ATP + H(+) = 3'-dephospho-CoA + diphosphate. The protein operates within cofactor biosynthesis; coenzyme A biosynthesis; CoA from (R)-pantothenate: step 4/5. In terms of biological role, reversibly transfers an adenylyl group from ATP to 4'-phosphopantetheine, yielding dephospho-CoA (dPCoA) and pyrophosphate. This is Phosphopantetheine adenylyltransferase from Nitrosomonas eutropha (strain DSM 101675 / C91 / Nm57).